A 75-amino-acid polypeptide reads, in one-letter code: MLGALMGVAGGAPMGGASPMGGMPSIASSSSAETGQQTQSGNFTGGGINFGSNNNNQLLIVGAVVIGLFLVIKRK.

The tract at residues 19–47 (PMGGMPSIASSSSAETGQQTQSGNFTGGG) is disordered. Polar residues predominate over residues 26 to 39 (IASSSSAETGQQTQ). A helical membrane pass occupies residues 55 to 72 (NNQLLIVGAVVIGLFLVI).

Its subcellular location is the virion membrane. The sequence is that of Protein P8 (VIII) from Pseudoalteromonas phage PM2 (Bacteriophage PM2).